Consider the following 126-residue polypeptide: MDKTLKFTDSHEWVRDNGDGTATIGISEHAQEMLGDVVFVDLPDVEDEVEAGESFSLVESVKAASDIYSPITGEVVEINEELEDSPELINEEPYEGGWIVKVKLSDPSELDDLKDAEEYLSSIEEE.

One can recognise a Lipoyl-binding domain in the interval 21–103 (TATIGISEHA…YEGGWIVKVK (83 aa)). The residue at position 62 (Lys-62) is an N6-lipoyllysine.

It belongs to the GcvH family. As to quaternary structure, the glycine cleavage system is composed of four proteins: P, T, L and H. (R)-lipoate is required as a cofactor.

In terms of biological role, the glycine cleavage system catalyzes the degradation of glycine. The H protein shuttles the methylamine group of glycine from the P protein to the T protein. The sequence is that of Glycine cleavage system H protein from Vibrio campbellii (strain ATCC BAA-1116).